A 245-amino-acid polypeptide reads, in one-letter code: Probable 2-phosphosulfolactate phosphatase (245 aa).

It belongs to the ComB family. It depends on Mg(2+) as a cofactor.

It catalyses the reaction (2R)-O-phospho-3-sulfolactate + H2O = (2R)-3-sulfolactate + phosphate. The chain is Probable 2-phosphosulfolactate phosphatase from Synechococcus sp. (strain RCC307).